Here is a 150-residue protein sequence, read N- to C-terminus: 3-dehydroquinate dehydratase (150 aa).

Residue tyrosine 26 is the Proton acceptor of the active site. The substrate site is built by asparagine 77, histidine 83, and aspartate 90. Histidine 103 serves as the catalytic Proton donor. Substrate contacts are provided by residues 104 to 105 and arginine 114; that span reads LS.

Belongs to the type-II 3-dehydroquinase family. In terms of assembly, homododecamer.

The catalysed reaction is 3-dehydroquinate = 3-dehydroshikimate + H2O. Its pathway is metabolic intermediate biosynthesis; chorismate biosynthesis; chorismate from D-erythrose 4-phosphate and phosphoenolpyruvate: step 3/7. Catalyzes a trans-dehydration via an enolate intermediate. This Enterobacter sp. (strain 638) protein is 3-dehydroquinate dehydratase.